Here is a 206-residue protein sequence, read N- to C-terminus: Outer-membrane lipoprotein carrier protein (206 aa).

Residues 1-20 (MRLIRMLLPVLALTTLTAHA) form the signal peptide.

The protein belongs to the LolA family. In terms of assembly, monomer.

The protein localises to the periplasm. Its function is as follows. Participates in the translocation of lipoproteins from the inner membrane to the outer membrane. Only forms a complex with a lipoprotein if the residue after the N-terminal Cys is not an aspartate (The Asp acts as a targeting signal to indicate that the lipoprotein should stay in the inner membrane). The polypeptide is Outer-membrane lipoprotein carrier protein (Pseudomonas fluorescens (strain Pf0-1)).